A 1014-amino-acid chain; its full sequence is Regulator of telomere elongation helicase 1 homolog (1014 aa).

In terms of domain architecture, Helicase ATP-binding spans 7–308 (RGVDVDFPYD…NSADKQFDPE (302 aa)). An ATP-binding site is contributed by 42-49 (SPTGTGKT). Residues 70–85 (GGGGGGGGGGGGGGGS) are compositionally biased toward gly residues. The tract at residues 70 to 106 (GGGGGGGGGGGGGGGSQQPPYGSQPSGSQHSGGSASQ) is disordered. Residues 86–106 (QQPPYGSQPSGSQHSGGSASQ) show a composition bias toward low complexity. [4Fe-4S] cluster contacts are provided by cysteine 149, cysteine 170, cysteine 175, and cysteine 211. The short motif at 255 to 258 (DEAH) is the DEAH box element. Residues 906 to 930 (SSKKSNITHAPGNSGAIHEKSGGQE) form a disordered region.

This sequence belongs to the helicase family. RAD3/XPD subfamily.

It is found in the nucleus. The catalysed reaction is ATP + H2O = ADP + phosphate + H(+). Its function is as follows. A probable ATP-dependent DNA helicase implicated in DNA replication, DNA repair and the maintenance of genomic stability. Acts as an anti-recombinase to counteract toxic recombination and limit crossover during meiosis. Regulates meiotic recombination and crossover homeostasis by physically dissociating strand invasion events and thereby promotes noncrossover repair by meiotic synthesis dependent strand annealing (SDSA) as well as disassembly of D loop recombination intermediates. The protein is Regulator of telomere elongation helicase 1 homolog of Oryza sativa subsp. japonica (Rice).